Here is a 246-residue protein sequence, read N- to C-terminus: MKKILAEITYDGSIYHGFQIQPTKPTIQGEIEKALMKINKKKVKIHSSGRTDKGVHAKKQIITFDININIQLNNLKKALNAILLKNSIKILKLKYMKNSFHPRFNAQKRKYSYRILNSNNYYPWEGYQAHYVNKKLNISNLNQMAKILIGNHDFTTFSCIKDKSKSKFRHIYLAKFKKRGKYIIFEIIGSSFLWKMVRSIIGTMLDIEIKNESISTFETILKSKNRNLARTTAPANALFLDKVYYE.

Catalysis depends on D52, which acts as the Nucleophile. Y111 contributes to the substrate binding site.

This sequence belongs to the tRNA pseudouridine synthase TruA family. As to quaternary structure, homodimer.

It carries out the reaction uridine(38/39/40) in tRNA = pseudouridine(38/39/40) in tRNA. Functionally, formation of pseudouridine at positions 38, 39 and 40 in the anticodon stem and loop of transfer RNAs. This chain is tRNA pseudouridine synthase A, found in Borrelia garinii subsp. bavariensis (strain ATCC BAA-2496 / DSM 23469 / PBi) (Borreliella bavariensis).